Consider the following 79-residue polypeptide: Large ribosomal subunit protein uL24 (79 aa).

Belongs to the universal ribosomal protein uL24 family. Part of the 50S ribosomal subunit.

Its function is as follows. One of two assembly initiator proteins, it binds directly to the 5'-end of the 23S rRNA, where it nucleates assembly of the 50S subunit. One of the proteins that surrounds the polypeptide exit tunnel on the outside of the subunit. This is Large ribosomal subunit protein uL24 from Lactobacillus delbrueckii subsp. bulgaricus (strain ATCC BAA-365 / Lb-18).